The following is a 450-amino-acid chain: Folate synthesis bifunctional protein (450 aa).

Residues 1 to 166 (MTTWNFVCLG…TFAELAAIYP (166 aa)) form an HPPK region. The region spanning 180 to 441 (TQIMGIVNVT…QVEGNRRVLA (262 aa)) is the Pterin-binding domain. The interval 182-450 (IMGIVNVTDD…AAAAWSGMPV (269 aa)) is DHPS. A Mg(2+)-binding site is contributed by N187. (7,8-dihydropterin-6-yl)methyl diphosphate contacts are provided by residues T227, D267, N287, D358, K395, and 429–431 (RVH).

It in the C-terminal section; belongs to the DHPS family. In the N-terminal section; belongs to the HPPK family. Requires Mg(2+) as cofactor.

It catalyses the reaction 6-hydroxymethyl-7,8-dihydropterin + ATP = (7,8-dihydropterin-6-yl)methyl diphosphate + AMP + H(+). The catalysed reaction is (7,8-dihydropterin-6-yl)methyl diphosphate + 4-aminobenzoate = 7,8-dihydropteroate + diphosphate. Its pathway is cofactor biosynthesis; tetrahydrofolate biosynthesis; 2-amino-4-hydroxy-6-hydroxymethyl-7,8-dihydropteridine diphosphate from 7,8-dihydroneopterin triphosphate: step 4/4. It participates in cofactor biosynthesis; tetrahydrofolate biosynthesis; 7,8-dihydrofolate from 2-amino-4-hydroxy-6-hydroxymethyl-7,8-dihydropteridine diphosphate and 4-aminobenzoate: step 1/2. The sequence is that of Folate synthesis bifunctional protein (folKP) from Chlamydia muridarum (strain MoPn / Nigg).